Here is a 639-residue protein sequence, read N- to C-terminus: Muscarinic acetylcholine receptor M3 (639 aa).

The Extracellular portion of the chain corresponds to 1 to 115 (MLTHYQLCFQ…DPLGGHAVWQ (115 aa)). N-linked (GlcNAc...) asparagine glycans are attached at residues asparagine 16, asparagine 44, asparagine 45, asparagine 54, asparagine 97, and asparagine 101. Residues 116–139 (VVLIAFLTGIIALVTIIGNILVIV) form a helical membrane-spanning segment. At 140–152 (SFKVNKQLKTVNN) the chain is on the cytoplasmic side. Residues 153–173 (YFLLSLACADLIIGVISMNLF) form a helical membrane-spanning segment. At 174–190 (TTYIIMGHWALGNLACD) the chain is on the extracellular side. Cysteines 189 and 269 form a disulfide. Residues 191-212 (LWLSIDYVASNASVMNLLVISF) form a helical membrane-spanning segment. At 213 to 232 (DRYFSITRPLTYRAKRTTKR) the chain is on the cytoplasmic side. A helical membrane pass occupies residues 233 to 255 (AGVMIGLAWIISFVLWAPAILFW). Topologically, residues 256–277 (QYFVGKRTVPLDECFIQFLSEP) are extracellular. Residues 278-300 (IITFGTAIAAFYLPVTIMSILYW) form a helical membrane-spanning segment. Residues 301-542 (RIYKETEKRT…LIKEKKAAQT (242 aa)) lie on the Cytoplasmic side of the membrane. Disordered stretches follow at residues 370 to 404 (PNTD…DEED) and 431 to 471 (LPSS…GGSF). Over residues 382-393 (SDSWNNNDAAAS) the composition is skewed to low complexity. Residues 443 to 454 (ELQKSDTDSQEK) are compositionally biased toward basic and acidic residues. A helical membrane pass occupies residues 543–563 (LSAILFAFIITWTPYNIMVLV). Topologically, residues 564-576 (NTFCDCVPKTVWN) are extracellular. Residues 577–596 (LGYWLCYINSTVNPVCYALC) traverse the membrane as a helical segment. The Cytoplasmic portion of the chain corresponds to 597 to 639 (NKMFRNTFKMLLLCQCDKRKRRKQQYQQRQSVIFHKRIPREAS).

It belongs to the G-protein coupled receptor 1 family. Muscarinic acetylcholine receptor subfamily. CHRM3 sub-subfamily. Brain, heart atria, and ventricle.

The protein resides in the cell membrane. It localises to the postsynaptic cell membrane. In terms of biological role, the muscarinic acetylcholine receptor mediates various cellular responses, including inhibition of adenylate cyclase, breakdown of phosphoinositides and modulation of potassium channels through the action of G proteins. Primary transducing effect is Pi turnover. This Gallus gallus (Chicken) protein is Muscarinic acetylcholine receptor M3 (CHRM3).